The sequence spans 703 residues: Polyribonucleotide nucleotidyltransferase (703 aa).

Residues D486 and D492 each coordinate Mg(2+). Residues 554–613 (PKIITTNIDPEKIRDVIGPGGKMINKIIAETGVKIDIEEDGRVYILTPDSAAAQKALKII) enclose the KH domain. In terms of domain architecture, S1 motif spans 623–691 (GEVYLGKVVR…KQGRINLSRK (69 aa)).

Belongs to the polyribonucleotide nucleotidyltransferase family. Mg(2+) serves as cofactor.

The protein resides in the cytoplasm. The enzyme catalyses RNA(n+1) + phosphate = RNA(n) + a ribonucleoside 5'-diphosphate. Its function is as follows. Involved in mRNA degradation. Catalyzes the phosphorolysis of single-stranded polyribonucleotides processively in the 3'- to 5'-direction. The polypeptide is Polyribonucleotide nucleotidyltransferase (Ruminiclostridium cellulolyticum (strain ATCC 35319 / DSM 5812 / JCM 6584 / H10) (Clostridium cellulolyticum)).